Consider the following 399-residue polypeptide: MQAGVSVPHYQGMAGELQPLPVLIITSVALLVTGVVMISSASMDMAAATLGNSYHYVIRQILFAGLGCATALVAVNVPVSWWERSGWLLLGIGLLVLVLVLTPLGRTVNGSTRWIPMGLFNVQVSEVAKLCLIAYLAGYVVRRREELLHTWPGFLKPLGVLGVASVLLVIQPDFGATVVLVTAAAGMIFLSGVRLSRFMPLIGVLAALGTILVVTQPYRLKRVISYLDPWKDQFDSGYQLTQSLIAFGRGEWVGVGLGNSVQKLFFLPEAHTDFIYAIIAEEFGLLGALVVLGLFAALVVSGLVIARRAEKAGMAFGACFSYGITLLIGLQAGINMAVSTGLLPTKGLTLPLVSYGGSSLMVTCIGIAVIARVELERQDRARVASETKGNRTKGGAVYD.

Transmembrane regions (helical) follow at residues 19–39 (PLPVLIITSVALLVTGVVMIS), 61–81 (ILFAGLGCATALVAVNVPVSW), 85–105 (SGWLLLGIGLLVLVLVLTPLG), 114–134 (WIPMGLFNVQVSEVAKLCLIA), 160–180 (VLGVASVLLVIQPDFGATVVL), 198–218 (FMPLIGVLAALGTILVVTQPY), 285–305 (LLGALVVLGLFAALVVSGLVI), 314–334 (MAFGACFSYGITLLIGLQAGI), and 350–370 (LPLVSYGGSSLMVTCIGIAVI).

Belongs to the SEDS family. FtsW subfamily.

Its subcellular location is the cell inner membrane. The enzyme catalyses [GlcNAc-(1-&gt;4)-Mur2Ac(oyl-L-Ala-gamma-D-Glu-L-Lys-D-Ala-D-Ala)](n)-di-trans,octa-cis-undecaprenyl diphosphate + beta-D-GlcNAc-(1-&gt;4)-Mur2Ac(oyl-L-Ala-gamma-D-Glu-L-Lys-D-Ala-D-Ala)-di-trans,octa-cis-undecaprenyl diphosphate = [GlcNAc-(1-&gt;4)-Mur2Ac(oyl-L-Ala-gamma-D-Glu-L-Lys-D-Ala-D-Ala)](n+1)-di-trans,octa-cis-undecaprenyl diphosphate + di-trans,octa-cis-undecaprenyl diphosphate + H(+). The protein operates within cell wall biogenesis; peptidoglycan biosynthesis. Functionally, peptidoglycan polymerase that is essential for cell division. This Marinobacter nauticus (strain ATCC 700491 / DSM 11845 / VT8) (Marinobacter aquaeolei) protein is Probable peptidoglycan glycosyltransferase FtsW.